We begin with the raw amino-acid sequence, 526 residues long: Fumitremorgin C synthase (526 aa).

The chain crosses the membrane as a helical span at residues 4-24 (LPLSPAVLFLIIVLPILYLWI). C443 is a binding site for heme.

Belongs to the cytochrome P450 family. It depends on heme as a cofactor.

The protein localises to the membrane. The enzyme catalyses tryprostatin A + reduced [NADPH--hemoprotein reductase] + O2 = fumitremorgin C + oxidized [NADPH--hemoprotein reductase] + 2 H2O + H(+). It functions in the pathway mycotoxin biosynthesis. Functionally, cytochrome P450 monooxygenase; part of the gene cluster that mediates the biosynthesis of fumitremorgins, indole alkaloids that carry not only intriguing chemical structures, but also interesting biological and pharmacological activities. The biosynthesis of fumitremorgin-type alkaloids begins by condensation of the two amino acids L-tryptophan and L-proline to brevianamide F, catalyzed by the non-ribosomal peptide synthetase ftmA. Brevianamide F is then prenylated by the prenyltransferase ftmPT1/ftmB in the presence of dimethylallyl diphosphate, resulting in the formation of tryprostatin B. The three cytochrome P450 monooxygenases, ftmP450-1/ftmC, ftmP450-2/ftmE and ftmP450-3/FtmG, are responsible for the conversion of tryprostatin B to 6-hydroxytryprostatin B, tryprostatin A to fumitremorgin C and fumitremorgin C to 12,13-dihydroxyfumitremorgin C, respectively. The putative methyltransferase ftmMT/ftmD is expected for the conversion of 6-hydroxytryprostatin B to tryprostatin A. FtmPT2/FtmH catalyzes the prenylation of 12,13-dihydroxyfumitre-morgin C in the presence of dimethylallyl diphosphate, resulting in the formation of fumitremorgin B. Fumitremorgin B is further converted to verruculogen by ftmOx1/ftmF via the insertion of an endoperoxide bond between the two prenyl moieties. In some fungal species, verruculogen is further converted to fumitremorgin A, but the enzymes involved in this step have not been identified yet. This is Fumitremorgin C synthase from Aspergillus fumigatus (Neosartorya fumigata).